Reading from the N-terminus, the 185-residue chain is ATP synthase subunit b 2 (185 aa).

The tract at residues 1 to 24 is disordered; it reads MADSHGNAKGATAHTEAGGGHKAP. A helical transmembrane segment spans residues 34 to 56; sequence ASQLVSLTIAFVALYLISSRLAL.

Belongs to the ATPase B chain family. As to quaternary structure, F-type ATPases have 2 components, F(1) - the catalytic core - and F(0) - the membrane proton channel. F(1) has five subunits: alpha(3), beta(3), gamma(1), delta(1), epsilon(1). F(0) has three main subunits: a(1), b(2) and c(10-14). The alpha and beta chains form an alternating ring which encloses part of the gamma chain. F(1) is attached to F(0) by a central stalk formed by the gamma and epsilon chains, while a peripheral stalk is formed by the delta and b chains.

It localises to the cell inner membrane. Its function is as follows. F(1)F(0) ATP synthase produces ATP from ADP in the presence of a proton or sodium gradient. F-type ATPases consist of two structural domains, F(1) containing the extramembraneous catalytic core and F(0) containing the membrane proton channel, linked together by a central stalk and a peripheral stalk. During catalysis, ATP synthesis in the catalytic domain of F(1) is coupled via a rotary mechanism of the central stalk subunits to proton translocation. Functionally, component of the F(0) channel, it forms part of the peripheral stalk, linking F(1) to F(0). The b'-subunit is a diverged and duplicated form of b found in plants and photosynthetic bacteria. The protein is ATP synthase subunit b 2 (atpF2) of Nitrobacter hamburgensis (strain DSM 10229 / NCIMB 13809 / X14).